The following is a 117-amino-acid chain: UPF0231 protein HI_1724 (117 aa).

This sequence belongs to the UPF0231 family.

The polypeptide is UPF0231 protein HI_1724 (Haemophilus influenzae (strain ATCC 51907 / DSM 11121 / KW20 / Rd)).